The sequence spans 452 residues: Protein CLT3, chloroplastic (452 aa).

Residues 1-34 (MATTSRRFTTGLFASITSVKSHSANRPQSISLIR) constitute a chloroplast transit peptide. Transmembrane regions (helical) follow at residues 105–125 (AEIV…RVMY), 137–157 (FFLA…ILYF), 175–195 (PFLI…AAAA), 202–222 (TTVL…IFLG), 230–250 (ILGC…GSGA), 258–278 (GVLW…GTVL), 307–327 (FQAI…GIPF), 353–373 (GAPF…IALL), 389–409 (TVSV…LGVA), and 412–432 (LPKG…LYSW).

Belongs to the CRT-like transporter family.

The protein resides in the plastid. It is found in the chloroplast membrane. In terms of biological role, involved in thiol transport from the plastid to the cytosol. Transports probably both glutathione (GSH) and its precursor, gamma-glutamylcysteine (gamma-EC). Exhibits some functional redundancy with CLT1 in maintaining the root GSH pool. The sequence is that of Protein CLT3, chloroplastic from Arabidopsis thaliana (Mouse-ear cress).